We begin with the raw amino-acid sequence, 244 residues long: MTMPFYVSPEQLMKDRADFARKGIARGRSVVVLGYDGGILFATENPSRALHKISEIYDRIAFAAVGKYNEFENLRVAGVRYADLRGYSYDRKDVTARGLANAYAQTLGTVFTTESKPLEVELVVAEVGDTPEADQIYRLSYDGSVADEHGHVAMGGQAEQLGKRLDDGWREGLTLTEALDLATTTLGAVGTDGQLLAAGSERTIDAGQLEVAVLDRARPRRAFRRLHGAALTHGRGAPHGEGAR.

It belongs to the peptidase T1A family. The 20S proteasome core is composed of 14 alpha and 14 beta subunits that assemble into four stacked heptameric rings, resulting in a barrel-shaped structure. The two inner rings, each composed of seven catalytic beta subunits, are sandwiched by two outer rings, each composed of seven alpha subunits. The catalytic chamber with the active sites is on the inside of the barrel. Has a gated structure, the ends of the cylinder being occluded by the N-termini of the alpha-subunits. Is capped by the proteasome-associated ATPase, ARC.

The protein localises to the cytoplasm. Its pathway is protein degradation; proteasomal Pup-dependent pathway. With respect to regulation, the formation of the proteasomal ATPase ARC-20S proteasome complex, likely via the docking of the C-termini of ARC into the intersubunit pockets in the alpha-rings, may trigger opening of the gate for substrate entry. Interconversion between the open-gate and close-gate conformations leads to a dynamic regulation of the 20S proteasome proteolysis activity. Component of the proteasome core, a large protease complex with broad specificity involved in protein degradation. This Xylanimonas cellulosilytica (strain DSM 15894 / JCM 12276 / CECT 5975 / KCTC 9989 / LMG 20990 / NBRC 107835 / XIL07) protein is Proteasome subunit alpha.